The sequence spans 197 residues: Fucoxanthin-chlorophyll a-c binding protein D, chloroplastic (197 aa).

A chloroplast-targeting transit peptide spans 1 to 31 (MKTAVIASLIAGAAAFAPAKNAARTSVATNM). The next 3 membrane-spanning stretches (helical) occupy residues 73–94 (ISMLAVVGYLVQEAGVRLPGTI), 114–133 (PAGGLVQLLFFIGVLESSVM), and 174–196 (GRAAQMGILALMVHEQLGVSLLP).

The protein belongs to the fucoxanthin chlorophyll protein family. As to quaternary structure, the LHC complex of chromophytic algae is composed of fucoxanthin, chlorophyll A and C bound non-covalently by fucoxanthin chlorophyll proteins (FCPs). The ratio of the pigments in LHC; fucoxanthin: chlorophyll C: chlorophyll A; (0.6-1): (0.1-0.3): (1).

The protein localises to the plastid. It localises to the chloroplast thylakoid membrane. The light-harvesting complex (LHC) functions as a light receptor, it captures and delivers excitation energy to photosystems with which it is closely associated. Energy is transferred from the carotenoid and chlorophyll C (or B) to chlorophyll A and the photosynthetic reaction centers where it is used to synthesize ATP and reducing power. The sequence is that of Fucoxanthin-chlorophyll a-c binding protein D, chloroplastic (FCPD) from Phaeodactylum tricornutum (Diatom).